Consider the following 162-residue polypeptide: UPF0178 protein RHOS4_24670 (162 aa).

Belongs to the UPF0178 family.

This chain is UPF0178 protein RHOS4_24670, found in Cereibacter sphaeroides (strain ATCC 17023 / DSM 158 / JCM 6121 / CCUG 31486 / LMG 2827 / NBRC 12203 / NCIMB 8253 / ATH 2.4.1.) (Rhodobacter sphaeroides).